Consider the following 271-residue polypeptide: Co-chaperone protein DjlA (271 aa).

Over 1 to 6 the chain is Periplasmic; sequence MQYWGK. The helical transmembrane segment at 7 to 31 threads the bilayer; the sequence is IIGVAVALIMGGGFWGVVLGLLIGH. At 32 to 271 the chain is on the cytoplasmic side; that stretch reads MFDKARSRKM…ELIKQQKGFK (240 aa). Positions 205-271 constitute a J domain; it reads DACNVLGVKP…ELIKQQKGFK (67 aa).

Homodimer.

It is found in the cell inner membrane. Its function is as follows. Regulatory DnaK co-chaperone. Direct interaction between DnaK and DjlA is needed for the induction of the wcaABCDE operon, involved in the synthesis of a colanic acid polysaccharide capsule, possibly through activation of the RcsB/RcsC phosphotransfer signaling pathway. The colanic acid capsule may help the bacterium survive conditions outside the host. The sequence is that of Co-chaperone protein DjlA from Escherichia coli O6:H1 (strain CFT073 / ATCC 700928 / UPEC).